The following is a 926-amino-acid chain: Piwi-like protein Ago3 (926 aa).

Residues 1 to 62 (MADPGKGRGR…PSTSGVSIGG (62 aa)) form a disordered region. Residues 26 to 56 (SPSQSESQSPESTPEQSTAPSTIASATPSTS) show a composition bias toward low complexity. A PAZ domain is found at 339–455 (TVLSLIKEVV…LIPELCQLTG (117 aa)). In terms of domain architecture, Piwi spans 620–912 (LVVAICSTKR…LSYLVGQCVH (293 aa)). Gln672 contributes to the Mg(2+) binding site. Active-site residues include Asp697, Glu735, Asp767, and His901. Leu926 is a Mg(2+) binding site.

This sequence belongs to the argonaute family. Piwi subfamily. Interacts (when symmetrically methylated) with Papi/TDRKH. Interacts with Vasa. Mg(2+) serves as cofactor. Post-translationally, arginine methylation is required for the interaction with Tudor domain-containing protein Papi/TDRKH. Highly expressed in the larval testis, pupal ovary and adult eggs.

It localises to the cytoplasm. Its function is as follows. Endoribonuclease that plays a central role during spermatogenesis by repressing transposable elements and preventing their mobilization, which is essential for the germline integrity. Plays an essential role in meiotic differentiation of spermatocytes, germ cell differentiation and in self-renewal of spermatogonial stem cells. Its presence in oocytes suggests that it may participate in similar functions during oogenesis in females. Acts via the piRNA metabolic process, which mediates the repression of transposable elements during meiosis by forming complexes composed of piRNAs and Piwi proteins and govern the methylation and subsequent repression of transposons. Directly binds piRNAs, a class of 24 to 30 nucleotide RNAs that are generated by a Dicer-independent mechanism and are primarily derived from transposons and other repeated sequence elements. Strongly prefers a have adenine at position 10 of their guide (g10A preference). Plays a key role in the piRNA amplification loop, also named ping-pong amplification cycle: antisense piRNA-bound Siwi and sense piRNA-bound Ago3 reciprocally cleave complementary transcripts, to couple the amplification of piRNAs with the repression of transposable elements. The polypeptide is Piwi-like protein Ago3 (AGO3) (Bombyx mori (Silk moth)).